We begin with the raw amino-acid sequence, 362 residues long: tRNA-specific 2-thiouridylase MnmA (362 aa).

ATP contacts are provided by residues Ala-6–Ser-13 and Leu-32. The Nucleophile role is filled by Cys-101. A disulfide bond links Cys-101 and Cys-197. Gly-125 is a binding site for ATP. The interaction with tRNA stretch occupies residues Lys-147–Gln-149. The active-site Cysteine persulfide intermediate is Cys-197.

Belongs to the MnmA/TRMU family.

The protein localises to the cytoplasm. It catalyses the reaction S-sulfanyl-L-cysteinyl-[protein] + uridine(34) in tRNA + AH2 + ATP = 2-thiouridine(34) in tRNA + L-cysteinyl-[protein] + A + AMP + diphosphate + H(+). In terms of biological role, catalyzes the 2-thiolation of uridine at the wobble position (U34) of tRNA, leading to the formation of s(2)U34. In Saccharopolyspora erythraea (strain ATCC 11635 / DSM 40517 / JCM 4748 / NBRC 13426 / NCIMB 8594 / NRRL 2338), this protein is tRNA-specific 2-thiouridylase MnmA.